Reading from the N-terminus, the 354-residue chain is Probable L-ascorbate-6-phosphate lactonase UlaG (354 aa).

Belongs to the UlaG family. It depends on a divalent metal cation as a cofactor.

Its subcellular location is the cytoplasm. It catalyses the reaction L-ascorbate 6-phosphate + H2O = 3-dehydro-L-gulonate 6-phosphate. The protein operates within cofactor degradation; L-ascorbate degradation; D-xylulose 5-phosphate from L-ascorbate: step 1/4. Probably catalyzes the hydrolysis of L-ascorbate-6-P into 3-keto-L-gulonate-6-P. Is essential for L-ascorbate utilization under anaerobic conditions. This Escherichia coli O139:H28 (strain E24377A / ETEC) protein is Probable L-ascorbate-6-phosphate lactonase UlaG.